Consider the following 160-residue polypeptide: Ribosomal RNA large subunit methyltransferase H (160 aa).

S-adenosyl-L-methionine contacts are provided by Leu-76 and Gly-108.

This sequence belongs to the RNA methyltransferase RlmH family. Homodimer.

The protein resides in the cytoplasm. The enzyme catalyses pseudouridine(1915) in 23S rRNA + S-adenosyl-L-methionine = N(3)-methylpseudouridine(1915) in 23S rRNA + S-adenosyl-L-homocysteine + H(+). Specifically methylates the pseudouridine at position 1915 (m3Psi1915) in 23S rRNA. This chain is Ribosomal RNA large subunit methyltransferase H, found in Rhodopseudomonas palustris (strain BisB5).